We begin with the raw amino-acid sequence, 219 residues long: Envelope protein US9 homolog (219 aa).

Over 1 to 193 (MEKAEAAAVV…RHRRRRVALT (193 aa)) the chain is Intravirion. The short motif at 145-146 (LL) is the Di-leucine internalization motif element. Positions 153–168 (DYDSESGCYYSESDNE) are acidic. Residues S163 and S165 each carry the phosphoserine; by host CK2 modification. A helical; Signal-anchor for type II membrane protein transmembrane segment spans residues 194-214 (VAGVILVVVLCAISGIVGAFL). Residues 215–219 (ARVFP) lie on the Virion surface side of the membrane.

The protein belongs to the alphaherpesvirinae envelope protein US9 family. Post-translationally, phosphorylated on serines within the acidic cluster. Phosphorylation determines whether endocytosed viral US9 traffics to the trans-Golgi network or recycles to the cell membrane.

It localises to the virion membrane. The protein resides in the host Golgi apparatus membrane. Its subcellular location is the host smooth endoplasmic reticulum membrane. It is found in the host cell membrane. Functionally, essential for the anterograde spread of the infection throughout the host nervous system. Together with the gE/gI heterodimer, US9 is involved in the sorting and transport of viral structural components toward axon tips. In Equine herpesvirus 1 (strain Kentucky A) (EHV-1), this protein is Envelope protein US9 homolog.